A 1176-amino-acid polypeptide reads, in one-letter code: Growth-differentiation transition protein 5 (1176 aa).

The signal sequence occupies residues 1 to 25 (MKNNFFKKTIILLIFLSIFILYSNA). Topologically, residues 26-913 (DEETITTPPG…DVPANENTLN (888 aa)) are extracellular. A helical transmembrane segment spans residues 914–934 (LLTIVLPICSAVVVASSVMLG). The Cytoplasmic segment spans residues 935–1176 (RLFYKKKFKK…NVGYNVHEYF (242 aa)). 2 stretches are compositionally biased toward low complexity: residues 965 to 974 (SNIENKSESI) and 1053 to 1066 (PQIS…SIPS). Disordered regions lie at residues 965 to 985 (SNIE…EQKE) and 1050 to 1080 (VDTP…PPST). Residues 1067-1078 (SSPPPPPLPLPP) show a composition bias toward pro residues.

Belongs to the GDT family.

Its subcellular location is the membrane. In Dictyostelium discoideum (Social amoeba), this protein is Growth-differentiation transition protein 5 (gdt5).